We begin with the raw amino-acid sequence, 356 residues long: DNA polymerase IV (356 aa).

The UmuC domain occupies 7–188 (IIHIDMDAFY…IPVTKFYGVG (182 aa)). Mg(2+) is bound by residues Asp11 and Asp106. Glu107 is an active-site residue.

This sequence belongs to the DNA polymerase type-Y family. Monomer. Mg(2+) serves as cofactor.

The protein resides in the cytoplasm. The catalysed reaction is DNA(n) + a 2'-deoxyribonucleoside 5'-triphosphate = DNA(n+1) + diphosphate. In terms of biological role, poorly processive, error-prone DNA polymerase involved in untargeted mutagenesis. Copies undamaged DNA at stalled replication forks, which arise in vivo from mismatched or misaligned primer ends. These misaligned primers can be extended by PolIV. Exhibits no 3'-5' exonuclease (proofreading) activity. May be involved in translesional synthesis, in conjunction with the beta clamp from PolIII. This Listeria monocytogenes serotype 4b (strain CLIP80459) protein is DNA polymerase IV.